A 38-amino-acid polypeptide reads, in one-letter code: Large ribosomal subunit protein bL36 (38 aa).

Belongs to the bacterial ribosomal protein bL36 family.

This Sorangium cellulosum (strain So ce56) (Polyangium cellulosum (strain So ce56)) protein is Large ribosomal subunit protein bL36.